A 167-amino-acid polypeptide reads, in one-letter code: Small heat shock protein C1 (167 aa).

The 109-residue stretch at 59–167 (PLYESNSIKS…EQDAREITIN (109 aa)) folds into the sHSP domain.

It belongs to the small heat shock protein (HSP20) family.

This is Small heat shock protein C1 (hspC1) from Rickettsia felis (strain ATCC VR-1525 / URRWXCal2) (Rickettsia azadi).